Reading from the N-terminus, the 458-residue chain is Cell division protein FtsZ (458 aa).

Residues 22–26 (GAGGN), 109–111 (GTG), glutamate 140, arginine 144, and aspartate 188 contribute to the GTP site. Residues 319 to 458 (KAEEEASKQP…IPFFKHRRQD (140 aa)) are disordered. A compositionally biased stretch (polar residues) spans 368–379 (NTISHEAPTQSI). Positions 401–418 (KQDRKENNRPQPVENKEK) are enriched in basic and acidic residues. Over residues 425–439 (SFSSDDSTSISQIET) the composition is skewed to low complexity.

The protein belongs to the FtsZ family. In terms of assembly, homodimer. Polymerizes to form a dynamic ring structure in a strictly GTP-dependent manner. Interacts directly with several other division proteins.

The protein localises to the cytoplasm. Functionally, essential cell division protein that forms a contractile ring structure (Z ring) at the future cell division site. The regulation of the ring assembly controls the timing and the location of cell division. One of the functions of the FtsZ ring is to recruit other cell division proteins to the septum to produce a new cell wall between the dividing cells. Binds GTP and shows GTPase activity. This Lactobacillus johnsonii (strain CNCM I-12250 / La1 / NCC 533) protein is Cell division protein FtsZ.